A 94-amino-acid chain; its full sequence is Acylphosphatase (94 aa).

Residues 8–94 (RLTAWVHGRV…REQITGFHER (87 aa)) enclose the Acylphosphatase-like domain. Catalysis depends on residues R23 and N41.

Belongs to the acylphosphatase family.

It catalyses the reaction an acyl phosphate + H2O = a carboxylate + phosphate + H(+). This chain is Acylphosphatase (acyP), found in Mycobacterium sp. (strain KMS).